A 1018-amino-acid polypeptide reads, in one-letter code: Fibronectin-binding protein A (1018 aa).

Positions 1 to 36 are cleaved as a signal peptide; sequence MKNNLRYGIRKHKLGAASVFLGTMIVVGMGQDKEAA. Residues 7-18 carry the YSIRK-G/S signaling motif motif; it reads YGIRKHKLGAAS. The interval 37–511 is ligand-binding A region; it reads ASEQKTTTVE…SNKANGNEKN (475 aa). Disordered regions lie at residues 38–61 and 78–195; these read SEQK…SETQ and ATVT…ETGT. Composition is skewed to polar residues over residues 39–61 and 78–92; these read EQKT…SETQ and ATVT…QVTT. Basic and acidic residues predominate over residues 112–126; sequence TVKEEVVKEEAKPQV. Positions 129–139 are enriched in polar residues; sequence TTQSQDNSGDQ. Residues 194–511 form a fibrinogen/elastin/tropoelastin-binding region; it reads GTDVTSKVTV…SNKANGNEKN (318 aa). Residues 512 to 872 form a fibronectin-binding region; it reads GPIIQNNKFE…EGQQTIEEDT (361 aa). The B-1 repeat unit spans residues 545–574; that stretch reads EEYDSSTLDIDYHTAIDGGGGYVDGYIETI. The segment at 545–604 is 2 X approximate tandem repeats; that stretch reads EEYDSSTLDIDYHTAIDGGGGYVDGYIETIEETDSSAIDIDYHTAVDSEAGHVGGYTESS. Residues 575 to 604 form a B-2 repeat; that stretch reads EETDSSAIDIDYHTAVDSEAGHVGGYTESS. 3 disordered regions span residues 595 to 622, 740 to 813, and 827 to 997; these read GHVG…NSKH, LGYE…DIDF, and EIIE…GMLF. The D-1 repeat unit spans residues 745 to 782; sequence GQNSGNQSFEEDTEEDKPKYEQGGNIVDIDFDSVPQIH. The tract at residues 745–878 is 4 X approximate tandem repeats, D-3 repeat has more fibronectin-binding activity; that stretch reads GQNSGNQSFE…EEDTTPPIVP (134 aa). Residues 783–820 form a D-2 repeat; that stretch reads GQNKGNQSFEEDTEKDKPKYEHGGNIIDIDFDSVPHIH. One copy of the D-3 repeat lies at 821–859; sequence GFNKHTEIIEEDTNKDKPSYQFGGHNSVDFEEDTLPKVS. The segment covering 827 to 838 has biased composition (basic and acidic residues); it reads EIIEEDTNKDKP. Residues 860-878 form a D-4; truncated repeat; the sequence is GQNEGQQTIEEDTTPPIVP. Residues 875–938 are compositionally biased toward pro residues; it reads PIVPPTPPTP…PAEPGKPVPP (64 aa). WR repeat units follow at residues 879-892, 893-906, 907-920, 921-934, and 935-948; these read PTPP…EPET, PTPP…EPGK, and PVPP…KPSK. Residues 879–948 form a 5 X tandem repeats, Pro-rich (WR) region; the sequence is PTPPTPEVPS…AKEEPKKPSK (70 aa). The short motif at 982–986 is the LPXTG sorting signal element; the sequence is LPETG. Pentaglycyl murein peptidoglycan amidated threonine is present on threonine 985. A propeptide spans 986 to 1018 (removed by sortase); that stretch reads GGEESTNKGMLFGGLFSILGLALLRRNKKNHKA.

It localises to the secreted. The protein localises to the cell wall. Possesses multiple, substituting fibronectin (Fn) binding regions, each capable of conferring adherence to both soluble and immobilized forms of Fn. This confers to S.aureus the ability to invade endothelial cells both in vivo and in vitro, without requiring additional factors, although in a slow and inefficient way through actin rearrangements in host cells. This invasion process is mediated by integrin alpha-5/beta-1. Promotes bacterial attachment to both soluble and immobilized forms of fibrinogen (Fg) by means of a unique binding site localized within the 17 C-terminal residues of the gamma-chain of human Fg. Both plasma proteins (Fn and Fg) function as a bridge between bacterium and host cell. Promotes attachment to immobilized elastin peptides in a dose-dependent and saturable manner. Promotes attachment to both full-length and segments of immobilized human tropoelastin at multiple sites in a dose and pH-dependent manner. Promotes adherence to and aggregation of activated platelets independently of other S.aureus surface molecules. Is a critical mediator implicated in the induction of experimental endocarditis in rats with catheter-induced aortic vegetations, promoting both colonization and persistence of the bacterium into the host. This chain is Fibronectin-binding protein A (fnbA), found in Staphylococcus aureus (strain NCTC 8325 / PS 47).